A 27-amino-acid polypeptide reads, in one-letter code: HSDGLFTSEYSKMRGNAQVQKFIQNLM.

Methionine 27 is modified (methionine amide).

It belongs to the glucagon family.

The protein localises to the secreted. In terms of biological role, hormone involved in different processes, such as regulation of the pH of the duodenal content, food intake and water homeostasis. Exerts its biological effects by binding to secretin receptor (SCTR), a G-protein coupled receptor expressed in the basolateral domain of several cells. The chain is Secretin from Gallus gallus (Chicken).